The following is a 546-amino-acid chain: Mitochondrial distribution and morphology protein 34 (546 aa).

The 195-residue stretch at 1–195 (MAFNFNWSPL…LPAIIHRLSL (195 aa)) folds into the SMP-LTD domain. 5 disordered regions span residues 208–230 (EVKA…QDPV), 299–319 (SHGG…SHVA), 344–382 (TMGA…CTDS), 395–416 (SSSA…SPDA), and 517–546 (RRIQ…AYGQ). Positions 349 to 362 (RHPRTRPSRKHKRR) are enriched in basic residues. Over residues 363–374 (VVDLRKPQKLDD) the composition is skewed to basic and acidic residues.

This sequence belongs to the MDM34 family. As to quaternary structure, component of the ER-mitochondria encounter structure (ERMES) or MDM complex, composed of MMM1, MDM10, MDM12 and MDM34.

It localises to the mitochondrion outer membrane. In terms of biological role, component of the ERMES/MDM complex, which serves as a molecular tether to connect the endoplasmic reticulum (ER) and mitochondria. Components of this complex are involved in the control of mitochondrial shape and protein biogenesis, and function in nonvesicular lipid trafficking between the ER and mitochondria. MDM34 is required for the interaction of the ER-resident membrane protein MMM1 and the outer mitochondrial membrane-resident beta-barrel protein MDM10. This Arthroderma otae (strain ATCC MYA-4605 / CBS 113480) (Microsporum canis) protein is Mitochondrial distribution and morphology protein 34.